The primary structure comprises 527 residues: Aspartokinase (527 aa).

The residue at position 333 (Thr-333) is a Phosphothreonine. Residues 442–527 (LVGKHMKQYI…RLEQLKRLGI (86 aa)) enclose the ACT domain.

The protein belongs to the aspartokinase family. Homohexamer. Interacts with FPR1; the interaction is direct, plays a role in feedback inhibition of aspartokinase by threonine, and inhibited by tacrolimus and sirolimus.

The catalysed reaction is L-aspartate + ATP = 4-phospho-L-aspartate + ADP. Its pathway is amino-acid biosynthesis; L-methionine biosynthesis via de novo pathway; L-homoserine from L-aspartate: step 1/3. It functions in the pathway amino-acid biosynthesis; L-threonine biosynthesis; L-threonine from L-aspartate: step 1/5. Its activity is regulated as follows. Allosterically inhibited by threonine. Its function is as follows. Phosphorylates aspartate, the first step in the biosynthesis of amino acids that derive from aspartate (the aspartate family of amino acids), including methioinine and threonine, the latter of which is a precursor to isoleucine. In Saccharomyces cerevisiae (strain ATCC 204508 / S288c) (Baker's yeast), this protein is Aspartokinase (HOM3).